A 277-amino-acid polypeptide reads, in one-letter code: Undecaprenyl-diphosphatase (277 aa).

The next 6 membrane-spanning stretches (helical) occupy residues 88-108, 117-137, 157-179, 191-211, 227-247, and 255-275; these read MGWLVILGSLPIIVLGLLFQD, MWIVATMLIVFGLILAVADAV, FAQAMALIPGVSRSGGTITAGLL, SFLLAIPAVFGSGLYQLYKVV, LATVIAFVVGYVIIGWFLKFV, and FVWYRIFLGLALYLLLGFGVI.

It belongs to the UppP family.

Its subcellular location is the cell membrane. It carries out the reaction di-trans,octa-cis-undecaprenyl diphosphate + H2O = di-trans,octa-cis-undecaprenyl phosphate + phosphate + H(+). Its function is as follows. Catalyzes the dephosphorylation of undecaprenyl diphosphate (UPP). Confers resistance to bacitracin. This Pseudarthrobacter chlorophenolicus (strain ATCC 700700 / DSM 12829 / CIP 107037 / JCM 12360 / KCTC 9906 / NCIMB 13794 / A6) (Arthrobacter chlorophenolicus) protein is Undecaprenyl-diphosphatase.